The following is a 355-amino-acid chain: Peptide chain release factor 1 (355 aa).

Glutamine 233 is modified (N5-methylglutamine). Residues 280–293 (ERRKKEQERADSRR) are compositionally biased toward basic and acidic residues. The disordered stretch occupies residues 280 to 308 (ERRKKEQERADSRRGQVGSGDRSERIRTY).

This sequence belongs to the prokaryotic/mitochondrial release factor family. In terms of processing, methylated by PrmC. Methylation increases the termination efficiency of RF1.

Its subcellular location is the cytoplasm. Its function is as follows. Peptide chain release factor 1 directs the termination of translation in response to the peptide chain termination codons UAG and UAA. The chain is Peptide chain release factor 1 from Rickettsia felis (strain ATCC VR-1525 / URRWXCal2) (Rickettsia azadi).